A 78-amino-acid chain; its full sequence is uncharacterized protein (78 aa).

This is an uncharacterized protein from Bacillus subtilis (strain 168).